The chain runs to 291 residues: Probable cell wall amidase LytH (291 aa).

The N-terminal stretch at 1 to 40 (MKKIDSWLTKHGLKNRLTLVVIVIFIIFLILLFMFVNLSD) is a signal peptide. The 65-residue stretch at 41–105 (EDTGQITITE…WVAGWHTNLN (65 aa)) folds into the SH3b domain. A MurNAc-LAA domain is found at 122 to 286 (IVLDPGHGGS…VEQAIVDGLK (165 aa)). A disordered region spans residues 123–147 (VLDPGHGGSDQGASSSTPSKSLEKN). Residues 133–142 (QGASSSTPSK) are compositionally biased toward polar residues.

This sequence belongs to the N-acetylmuramoyl-L-alanine amidase 3 family.

Its subcellular location is the secreted. Its function is as follows. Probably involved in cell-wall metabolism. In Staphylococcus epidermidis (strain ATCC 12228 / FDA PCI 1200), this protein is Probable cell wall amidase LytH (lytH).